The sequence spans 429 residues: Putative protease Do-like 14 (429 aa).

The tract at residues 87-113 (KSEAPINDEKGVSVEASDSSSKPSNGY) is disordered. Positions 113 to 338 (YLGRDTIANA…IRPWIGLKMV (226 aa)) are serine protease. Active-site charge relay system residues include His-165, Asp-203, and Ser-281. The region spanning 318-424 (IIEHFKKSGR…RVTLEVIPEE (107 aa)) is the PDZ domain.

This sequence belongs to the peptidase S1C family.

Functionally, putative serine protease. The chain is Putative protease Do-like 14 (DEGP14) from Arabidopsis thaliana (Mouse-ear cress).